The following is a 261-amino-acid chain: Putative hydro-lyase Nther_1142 (261 aa).

Belongs to the D-glutamate cyclase family.

In Natranaerobius thermophilus (strain ATCC BAA-1301 / DSM 18059 / JW/NM-WN-LF), this protein is Putative hydro-lyase Nther_1142.